The primary structure comprises 492 residues: Cobyric acid synthase (492 aa).

The GATase cobBQ-type domain maps to 252-440 (RPKIAVLAYP…VHGLFADDHL (189 aa)). Cys334 (nucleophile) is an active-site residue. The active site involves His432.

The protein belongs to the CobB/CobQ family. CobQ subfamily.

It functions in the pathway cofactor biosynthesis; adenosylcobalamin biosynthesis. In terms of biological role, catalyzes amidations at positions B, D, E, and G on adenosylcobyrinic A,C-diamide. NH(2) groups are provided by glutamine, and one molecule of ATP is hydrogenolyzed for each amidation. In Bradyrhizobium sp. (strain BTAi1 / ATCC BAA-1182), this protein is Cobyric acid synthase.